The primary structure comprises 453 residues: Secreted triacylglycerol lipase LIP2 (453 aa).

A signal peptide spans 1-19 (MKLSLVVLTLISVAAQALA). A glycan (N-linked (GlcNAc...) asparagine) is linked at asparagine 98. Residues cysteine 115 and cysteine 284 are joined by a disulfide bond. The active-site Nucleophile is the serine 197. A glycan (N-linked (GlcNAc...) asparagine) is linked at asparagine 230. Catalysis depends on residues aspartate 344 and histidine 378. An intrachain disulfide couples cysteine 360 to cysteine 406.

Belongs to the AB hydrolase superfamily. Lipase family. Class Lip subfamily.

It is found in the secreted. It catalyses the reaction a triacylglycerol + H2O = a diacylglycerol + a fatty acid + H(+). The enzyme catalyses a monoacylglycerol + H2O = glycerol + a fatty acid + H(+). It carries out the reaction a diacylglycerol + H2O = a monoacylglycerol + a fatty acid + H(+). Its activity is regulated as follows. The activity is significantly increased in the presence of Triton X-100 and partially inhibited by PMSF but unaffected by univalent and divalent metal ions. Activity is significantly decreased in acetate buffer compared to that in citrate buffer at the same pH. Major secreted lipase involved in Dandruff and seborrheic dermatitis (D/SD) probably via lipase-mediated breakdown of sebaceous lipids and release of irritating free fatty acids. Has triacylglycerol lipase activity and is able to hydrolyze triolein, tristearin, trilinolein, tripalmitoylglycerol and trihexadecenoin. Hydrolyze diacylglycerols such as distearin, dilinolein, dipalmitoylglycerol and dipalmitolein. Shows high esterase activity against 4-nitrophenyl palmitate and 1-naphthyl palmitate but not 1-naphthyl acetate, suggesting that it specifically recognizes fatty acids. Mostly converts monoolein to di- and triolein, while free fatty acids are only produced in low amounts. The protein is Secreted triacylglycerol lipase LIP2 of Malassezia globosa (strain ATCC MYA-4612 / CBS 7966) (Dandruff-associated fungus).